We begin with the raw amino-acid sequence, 1315 residues long: Tetratricopeptide repeat protein 21B (1315 aa).

TPR repeat units follow at residues 108-141 (RKAL…PHDS), 145-178 (PILK…GNDI), 192-225 (QNYS…QLAL), 285-323 (AQLF…TPQQ), 324-357 (AEIA…NESN), 492-525 (PQAV…SPSY), 563-596 (PLYH…PGMR), 616-649 (LSIF…FSGT), 721-754 (PRSF…NPKD), 756-788 (TLAR…GQQN), 790-821 (LCYD…EPVS), 830-863 (GRSQ…QARI), 883-916 (AEIC…CETD), 918-950 (KIML…DQDN), 951-984 (EPAT…KPDN), 1022-1055 (PGFQ…SDWG), 1196-1229 (EKSW…NRSC), 1231-1263 (KAYE…SNQT), and 1265-1298 (PAVG…HPTY).

Belongs to the TTC21 family. As to quaternary structure, component of the IFT complex A (IFT-A) complex. IFT-A complex is divided into a core subcomplex composed of IFT122:IFT140:WDR19 which is associated with TULP3 and a peripheral subcomplex composed of IFT43:WDR35:TTC21B. Interacts directy with WDR35 and TTC21B. Interacts with TTC25.

It localises to the cytoplasm. It is found in the cytoskeleton. The protein resides in the cilium axoneme. Functionally, component of the IFT complex A (IFT-A), a complex required for retrograde ciliary transport and entry into cilia of G protein-coupled receptors (GPCRs). Essential for retrograde trafficking of IFT-1, IFT-B and GPCRs. Negatively modulates the SHH signal transduction. This chain is Tetratricopeptide repeat protein 21B (Ttc21b), found in Mus musculus (Mouse).